Reading from the N-terminus, the 322-residue chain is MDTSSINAQSIFDDNAATLKLSWLTGHEGWERGFSADTVGNATSSADLVGHLNLIHPNRIQVLGEAEIDYYQRQTDEDRSRHMAELIALEPPFLVVAGGAAAPPELVLRCTRSSTPLFTTPMSAAAVIDSLRLYMSRILAPRATLHGVFIDILGMGVLLTGDSGLGKSELGLELISRGHGLVADDAVDFVRLGPDFVEGRCPPLLQNLLEVRGLGLLDIKTIFGETAVRRKMKLKLIVQLVRRPDGEFQRLPLESQTVDVLGLPISKVTIQVAAGRNLAVLVEAAVRNTILQLRGIDTLRDFMDRQRLAMQDPDSQFPGKLV.

Active-site residues include His-146 and Lys-167. Residue 161–168 coordinates ATP; sequence GDSGLGKS. Ser-168 is a binding site for Mg(2+). Asp-185 serves as the catalytic Proton acceptor; for phosphorylation activity. Proton donor; for dephosphorylation activity. The interval 209-218 is important for the catalytic mechanism of both phosphorylation and dephosphorylation; sequence LEVRGLGLLD. Mg(2+) is bound at residue Glu-210. Arg-250 is an active-site residue. Residues 271–276 form an important for the catalytic mechanism of dephosphorylation region; the sequence is QVAAGR.

It belongs to the HPrK/P family. Homohexamer. The cofactor is Mg(2+).

It carries out the reaction [HPr protein]-L-serine + ATP = [HPr protein]-O-phospho-L-serine + ADP + H(+). The catalysed reaction is [HPr protein]-O-phospho-L-serine + phosphate + H(+) = [HPr protein]-L-serine + diphosphate. Functionally, catalyzes the ATP- as well as the pyrophosphate-dependent phosphorylation of a specific serine residue in HPr, a phosphocarrier protein of the phosphoenolpyruvate-dependent sugar phosphotransferase system (PTS). HprK/P also catalyzes the pyrophosphate-producing, inorganic phosphate-dependent dephosphorylation (phosphorolysis) of seryl-phosphorylated HPr (P-Ser-HPr). The chain is HPr kinase/phosphorylase from Burkholderia lata (strain ATCC 17760 / DSM 23089 / LMG 22485 / NCIMB 9086 / R18194 / 383).